Reading from the N-terminus, the 285-residue chain is ATP phosphoribosyltransferase (285 aa).

It belongs to the ATP phosphoribosyltransferase family. Long subfamily. It depends on Mg(2+) as a cofactor.

Its subcellular location is the cytoplasm. The enzyme catalyses 1-(5-phospho-beta-D-ribosyl)-ATP + diphosphate = 5-phospho-alpha-D-ribose 1-diphosphate + ATP. It participates in amino-acid biosynthesis; L-histidine biosynthesis; L-histidine from 5-phospho-alpha-D-ribose 1-diphosphate: step 1/9. Its activity is regulated as follows. Feedback inhibited by histidine. Functionally, catalyzes the condensation of ATP and 5-phosphoribose 1-diphosphate to form N'-(5'-phosphoribosyl)-ATP (PR-ATP). Has a crucial role in the pathway because the rate of histidine biosynthesis seems to be controlled primarily by regulation of HisG enzymatic activity. The chain is ATP phosphoribosyltransferase from Methanocella arvoryzae (strain DSM 22066 / NBRC 105507 / MRE50).